A 941-amino-acid chain; its full sequence is DNA mismatch repair protein MutS (941 aa).

G613–S620 is an ATP binding site.

The protein belongs to the DNA mismatch repair MutS family.

In terms of biological role, this protein is involved in the repair of mismatches in DNA. It is possible that it carries out the mismatch recognition step. This protein has a weak ATPase activity. The sequence is that of DNA mismatch repair protein MutS from Clostridium botulinum (strain Alaska E43 / Type E3).